The chain runs to 236 residues: Ubiquinone biosynthesis O-methyltransferase (236 aa).

S-adenosyl-L-methionine contacts are provided by Arg-36, Gly-56, Asp-77, and Met-125.

It belongs to the methyltransferase superfamily. UbiG/COQ3 family.

It catalyses the reaction a 3-demethylubiquinol + S-adenosyl-L-methionine = a ubiquinol + S-adenosyl-L-homocysteine + H(+). The catalysed reaction is a 3-(all-trans-polyprenyl)benzene-1,2-diol + S-adenosyl-L-methionine = a 2-methoxy-6-(all-trans-polyprenyl)phenol + S-adenosyl-L-homocysteine + H(+). It functions in the pathway cofactor biosynthesis; ubiquinone biosynthesis. Its function is as follows. O-methyltransferase that catalyzes the 2 O-methylation steps in the ubiquinone biosynthetic pathway. This is Ubiquinone biosynthesis O-methyltransferase from Glaesserella parasuis serovar 5 (strain SH0165) (Haemophilus parasuis).